Here is a 181-residue protein sequence, read N- to C-terminus: Probable chemoreceptor glutamine deamidase CheD (181 aa).

Belongs to the CheD family.

The enzyme catalyses L-glutaminyl-[protein] + H2O = L-glutamyl-[protein] + NH4(+). Probably deamidates glutamine residues to glutamate on methyl-accepting chemotaxis receptors (MCPs), playing an important role in chemotaxis. This is Probable chemoreceptor glutamine deamidase CheD from Agrobacterium fabrum (strain C58 / ATCC 33970) (Agrobacterium tumefaciens (strain C58)).